The primary structure comprises 422 residues: Protein IQ-DOMAIN 5 (422 aa).

Positions 23 to 30 (SKKDENVK) match the Nuclear localization signal motif. IQ domains are found at residues 87 to 115 (ENRAATRIQTAYRGFLARRALRALKGLVR), 116 to 138 (LQALVRGHAVRKQAAVTLRCMQA), and 139 to 164 (LVRVQARVRARRVRLALELESETSQQ). Residues 137-151 (QALVRVQARVRARRV) are calmodulin-binding. Residues 269 to 422 (GENGMEQSEN…NSDPIKQRLA (154 aa)) are disordered. Residues 273-308 (MEQSENVPKTQIKSVSKMPNTSNLVSGVSSQMTGPC) show a composition bias toward polar residues. Positions 310–327 (SDGDSSSPGISSSIPVVS) are enriched in low complexity. Residues 355–371 (NPKERSREPNRSSKERL) are compositionally biased toward basic and acidic residues. Residues 373 to 387 (LPNSGKSLGSQSTKA) show a composition bias toward polar residues. The segment covering 412 to 422 (RNSDPIKQRLA) has biased composition (basic and acidic residues).

This sequence belongs to the IQD family. As to quaternary structure, binds to multiple calmodulin (CaM) in the presence of Ca(2+) and CaM-like proteins. In terms of tissue distribution, expressed mostly in vegetative tissues including older parts of the root, cotyledons, leaves and shoot apical meristems (SAM). Present at low levels in pollen, siliques and seeds.

The protein localises to the nucleus. The protein resides in the cytoplasm. Its subcellular location is the cytoskeleton. It is found in the spindle. It localises to the phragmoplast. Its function is as follows. May be involved in cooperative interactions with calmodulins or calmodulin-like proteins. Recruits calmodulin (CaM) calcium sensor proteins to cortical microtubule arrays, thus being a potential scaffold in cellular signaling and trafficking. Binds to microtubules (MTs) and promotes MT assembly and dynamics to modulate pavement cell (PC) morphogenesis via cellulose deposition-dependent anisotropic cell expansion triggered by cellulose synthase complexes (CSCs). May associate with nucleic acids and regulate gene expression at the transcriptional or post-transcriptional level. This is Protein IQ-DOMAIN 5 from Arabidopsis thaliana (Mouse-ear cress).